The following is a 463-amino-acid chain: MKKHASSRSKSATVYTFRIESFSHEGRGIAHFGEFAEHPQTKHGKKVFVRYALPGEVVRAKITHETKRFEEGELIEILDQPSIDRIVPVCPHFGVCGGCSMQHITPNQQIQIKQHVLASHLQHFAGLTVNEWLTPVRSLRADYRRRARVGVRYIPAKQKLIMGFREHGSNRLTPIQSCAVLDQRLSQALPELYDVLNRLVAKAEIGHIELAMGDDEVSLLVRHLNTLPDSDITQLCDYAQHKNWQLYLQAKGSDSLKRVDRSGAEMRLHYAVPAFNLNFAFSPLDFTQVNATVNQQMLKLACDLLKLQKGEHVLDLFCGLGNFSLPLARCVGDTGRVVGVEGSEEMVQRAFENAAQNALHNVEFYSQDLTKDFSHHSWANQGFDALLIDPPRSGAFEIMHYIANFEAKRIVYVSCNPATLARDAGVLAQHGYQLKKVGVMDMFTHTEHVESIALFEKIQEIND.

Positions 8–76 (RSKSATVYTF…KRFEEGELIE (69 aa)) constitute a TRAM domain. Positions 90, 96, 99, and 178 each coordinate [4Fe-4S] cluster. S-adenosyl-L-methionine is bound by residues Gln-288, Phe-317, Asn-322, Glu-341, Asp-368, and Asp-389. Cys-415 acts as the Nucleophile in catalysis.

It belongs to the class I-like SAM-binding methyltransferase superfamily. RNA M5U methyltransferase family. RlmD subfamily.

The enzyme catalyses uridine(1939) in 23S rRNA + S-adenosyl-L-methionine = 5-methyluridine(1939) in 23S rRNA + S-adenosyl-L-homocysteine + H(+). Its function is as follows. Catalyzes the formation of 5-methyl-uridine at position 1939 (m5U1939) in 23S rRNA. The sequence is that of 23S rRNA (uracil(1939)-C(5))-methyltransferase RlmD from Acinetobacter baylyi (strain ATCC 33305 / BD413 / ADP1).